The primary structure comprises 498 residues: Ammonium transporter 1 member 1 (498 aa).

The next 11 helical transmembrane spans lie at 39 to 59 (LLFS…LCAG), 74 to 94 (VLDA…FAFG), 120 to 140 (FFLF…GSIA), 148 to 168 (YLIY…HWIW), 192 to 212 (FAGS…GALI), 236 to 256 (LVVL…PGSF), 274 to 296 (SGVG…TTLF), 307 to 327 (VVDV…GCSV), 331 to 351 (WAAI…NALA), 360 to 380 (LEAA…TALF), and 411 to 431 (VIQI…LFYG).

The protein belongs to the ammonia transporter channel (TC 1.A.11.2) family. As to expression, expressed in roots and shoots.

It is found in the membrane. Its function is as follows. Ammonium transporter probably involved in ammonium uptake from the soil. The sequence is that of Ammonium transporter 1 member 1 (AMT1-1) from Oryza sativa subsp. japonica (Rice).